A 235-amino-acid chain; its full sequence is Ubiquinone/menaquinone biosynthesis C-methyltransferase UbiE (235 aa).

S-adenosyl-L-methionine contacts are provided by Thr-59, Asp-84, and Ser-123.

It belongs to the class I-like SAM-binding methyltransferase superfamily. MenG/UbiE family.

The enzyme catalyses a 2-demethylmenaquinol + S-adenosyl-L-methionine = a menaquinol + S-adenosyl-L-homocysteine + H(+). It catalyses the reaction a 2-methoxy-6-(all-trans-polyprenyl)benzene-1,4-diol + S-adenosyl-L-methionine = a 5-methoxy-2-methyl-3-(all-trans-polyprenyl)benzene-1,4-diol + S-adenosyl-L-homocysteine + H(+). It functions in the pathway quinol/quinone metabolism; menaquinone biosynthesis; menaquinol from 1,4-dihydroxy-2-naphthoate: step 2/2. Its pathway is cofactor biosynthesis; ubiquinone biosynthesis. Its function is as follows. Methyltransferase required for the conversion of demethylmenaquinol (DMKH2) to menaquinol (MKH2) and the conversion of 2-polyprenyl-6-methoxy-1,4-benzoquinol (DDMQH2) to 2-polyprenyl-3-methyl-6-methoxy-1,4-benzoquinol (DMQH2). This is Ubiquinone/menaquinone biosynthesis C-methyltransferase UbiE from Campylobacter jejuni subsp. jejuni serotype O:23/36 (strain 81-176).